Here is a 290-residue protein sequence, read N- to C-terminus: Glycine--tRNA ligase alpha subunit (290 aa).

Belongs to the class-II aminoacyl-tRNA synthetase family. In terms of assembly, tetramer of two alpha and two beta subunits.

It localises to the cytoplasm. The catalysed reaction is tRNA(Gly) + glycine + ATP = glycyl-tRNA(Gly) + AMP + diphosphate. The chain is Glycine--tRNA ligase alpha subunit from Desulfotalea psychrophila (strain LSv54 / DSM 12343).